A 923-amino-acid chain; its full sequence is Periodic tryptophan protein 2 (923 aa).

5 WD repeats span residues Gly-12–Tyr-52, Glu-53–Phe-93, Asn-94–Gln-132, Gly-144–Ala-183, and Gly-189–Asp-228. A phosphoserine mark is found at Ser-225 and Ser-232. WD repeat units follow at residues Ala-258–Gln-297, Met-300–Lys-340, Gly-343–Thr-382, Glu-385–Thr-424, Thr-428–Ser-470, Gly-471–Glu-510, Glu-513–Asn-552, and Glu-575–Arg-614. Residues Ser-651 and Ser-664 each carry the phosphoserine modification. A disordered region spans residues Leu-653–Lys-674. Residues Arg-676–Pro-714 form a WD 14 repeat. Acidic residues-rich tracts occupy residues Lys-869–Gly-893 and Asp-911–Pro-923. Residues Lys-869–Pro-923 are disordered. Ser-912 and Ser-913 each carry phosphoserine.

The protein belongs to the WD repeat PWP2 family. As to quaternary structure, interacts with snoRNA U3. Interacts with MPP10. Component of the ribosomal small subunit (SSU) processome composed of at least 40 protein subunits and snoRNA U3.

Its subcellular location is the nucleus. It is found in the nucleolus. Functionally, required for bud-site selection and cell separation. Also involved in nucleolar processing of pre-18S ribosomal RNA. The sequence is that of Periodic tryptophan protein 2 (PWP2) from Saccharomyces cerevisiae (strain ATCC 204508 / S288c) (Baker's yeast).